A 268-amino-acid polypeptide reads, in one-letter code: Purine nucleoside phosphorylase (268 aa).

Residues S36, H68, 88-90 (RIH), and A120 contribute to the phosphate site. E189 lines the a purine D-ribonucleoside pocket. S208 is a binding site for phosphate. Residue N231 participates in a purine D-ribonucleoside binding.

Belongs to the PNP/MTAP phosphorylase family. As to quaternary structure, homotrimer.

It catalyses the reaction a purine 2'-deoxy-D-ribonucleoside + phosphate = a purine nucleobase + 2-deoxy-alpha-D-ribose 1-phosphate. Its pathway is purine metabolism; purine nucleoside salvage. Functionally, the purine nucleoside phosphorylases catalyze the phosphorolytic breakdown of the N-glycosidic bond in the beta-(deoxy)ribonucleoside molecules, with the formation of the corresponding free purine bases and pentose-1-phosphate. Cleaves guanosine, inosine, 2'-deoxyguanosine and 2'-deoxyinosine. The chain is Purine nucleoside phosphorylase (punA) from Mycobacterium leprae (strain TN).